The sequence spans 305 residues: MDQNNNTVSEFIMLGFTTDPVIQKVLFAVFLVVYTLTLMGNSSLIMLICNDSRLHTPMYFFIGNLSFLDLGLSSVYTPKILETCISEDKSISFAGCVAQFFFSAALDYTECYLLAAMAYDRYVAISKPLLYSQAMSLKLCVCFVVASYVGGFINSVIITKDTFALTFCNDNVIDDFFCDIPPLVKLACGKKKSFQSVLFFLLTSNVIIPIVFILATYLFIIATILRIRSTQGRLKAFSTCSSHLISVTLYYGSILYIYARPRSSYSLDRDKIVSTFYTVVFPMLNPLIYSLRNKDVKEALNKLLK.

Residues 1–24 lie on the Extracellular side of the membrane; sequence MDQNNNTVSEFIMLGFTTDPVIQK. Residues 25–45 traverse the membrane as a helical segment; sequence VLFAVFLVVYTLTLMGNSSLI. Topologically, residues 46 to 55 are cytoplasmic; sequence MLICNDSRLH. The chain crosses the membrane as a helical span at residues 56–76; it reads TPMYFFIGNLSFLDLGLSSVY. Residues 77–96 are Extracellular-facing; it reads TPKILETCISEDKSISFAGC. A disulfide bridge connects residues cysteine 96 and cysteine 178. The chain crosses the membrane as a helical span at residues 97–117; the sequence is VAQFFFSAALDYTECYLLAAM. Over 118-138 the chain is Cytoplasmic; the sequence is AYDRYVAISKPLLYSQAMSLK. The chain crosses the membrane as a helical span at residues 139-159; that stretch reads LCVCFVVASYVGGFINSVIIT. The Extracellular segment spans residues 160–204; the sequence is KDTFALTFCNDNVIDDFFCDIPPLVKLACGKKKSFQSVLFFLLTS. The chain crosses the membrane as a helical span at residues 205–225; sequence NVIIPIVFILATYLFIIATIL. At 226-236 the chain is on the cytoplasmic side; that stretch reads RIRSTQGRLKA. The helical transmembrane segment at 237 to 257 threads the bilayer; that stretch reads FSTCSSHLISVTLYYGSILYI. Over 258 to 270 the chain is Extracellular; it reads YARPRSSYSLDRD. Residues 271-291 form a helical membrane-spanning segment; that stretch reads KIVSTFYTVVFPMLNPLIYSL. Topologically, residues 292-305 are cytoplasmic; sequence RNKDVKEALNKLLK.

This sequence belongs to the G-protein coupled receptor 1 family.

Its subcellular location is the cell membrane. Functionally, odorant receptor. This chain is Olfactory receptor 9G19, found in Mus musculus (Mouse).